Here is a 71-residue protein sequence, read N- to C-terminus: Antitoxin VapB22 (71 aa).

The protein belongs to the phD/YefM antitoxin family.

Its function is as follows. Antitoxin component of a type II toxin-antitoxin (TA) system. Upon expression in M.smegmatis neutralizes the effect of cognate toxin VapC22. The polypeptide is Antitoxin VapB22 (vapB22) (Mycobacterium tuberculosis (strain ATCC 25618 / H37Rv)).